We begin with the raw amino-acid sequence, 914 residues long: TRPM8 channel-associated factor 3 (914 aa).

The region spanning 533–832 (NSWVSTGLYL…TYLQLQEGFG (300 aa)) is the Peptidase M60 domain.

It belongs to the TCAF family.

Its function is as follows. May play a role in the regulation of the cation channel TRPM8 activity. This chain is TRPM8 channel-associated factor 3, found in Rattus norvegicus (Rat).